A 347-amino-acid polypeptide reads, in one-letter code: Lipoyl synthase (347 aa).

Residues C55, C60, C66, C81, C85, C88, and S292 each coordinate [4Fe-4S] cluster. The region spanning 67-281 (WEDREATFLI…RDYGHDIGFA (215 aa)) is the Radical SAM core domain.

This sequence belongs to the radical SAM superfamily. Lipoyl synthase family. Requires [4Fe-4S] cluster as cofactor.

The protein localises to the cytoplasm. It carries out the reaction [[Fe-S] cluster scaffold protein carrying a second [4Fe-4S](2+) cluster] + N(6)-octanoyl-L-lysyl-[protein] + 2 oxidized [2Fe-2S]-[ferredoxin] + 2 S-adenosyl-L-methionine + 4 H(+) = [[Fe-S] cluster scaffold protein] + N(6)-[(R)-dihydrolipoyl]-L-lysyl-[protein] + 4 Fe(3+) + 2 hydrogen sulfide + 2 5'-deoxyadenosine + 2 L-methionine + 2 reduced [2Fe-2S]-[ferredoxin]. The protein operates within protein modification; protein lipoylation via endogenous pathway; protein N(6)-(lipoyl)lysine from octanoyl-[acyl-carrier-protein]: step 2/2. Functionally, catalyzes the radical-mediated insertion of two sulfur atoms into the C-6 and C-8 positions of the octanoyl moiety bound to the lipoyl domains of lipoate-dependent enzymes, thereby converting the octanoylated domains into lipoylated derivatives. In Corynebacterium kroppenstedtii (strain DSM 44385 / JCM 11950 / CIP 105744 / CCUG 35717), this protein is Lipoyl synthase.